Consider the following 124-residue polypeptide: Small ribosomal subunit protein bS6 (124 aa).

Residues 100–124 form a disordered region; that stretch reads KERRAARQKTGETQENVSQEESSTN. Positions 110–124 are enriched in polar residues; that stretch reads GETQENVSQEESSTN.

It belongs to the bacterial ribosomal protein bS6 family.

In terms of biological role, binds together with bS18 to 16S ribosomal RNA. In Fervidobacterium nodosum (strain ATCC 35602 / DSM 5306 / Rt17-B1), this protein is Small ribosomal subunit protein bS6.